Here is a 145-residue protein sequence, read N- to C-terminus: 3-hydroxyacyl-[acyl-carrier-protein] dehydratase FabZ (145 aa).

Residue His-48 is part of the active site.

The protein belongs to the thioester dehydratase family. FabZ subfamily.

It localises to the cytoplasm. The enzyme catalyses a (3R)-hydroxyacyl-[ACP] = a (2E)-enoyl-[ACP] + H2O. Involved in unsaturated fatty acids biosynthesis. Catalyzes the dehydration of short chain beta-hydroxyacyl-ACPs and long chain saturated and unsaturated beta-hydroxyacyl-ACPs. This is 3-hydroxyacyl-[acyl-carrier-protein] dehydratase FabZ from Stutzerimonas stutzeri (strain A1501) (Pseudomonas stutzeri).